The following is a 337-amino-acid chain: Heme A synthase (337 aa).

Transmembrane regions (helical) follow at residues 3–23 (LARW…IGGI), 94–114 (VIGL…MIPA), 120–140 (LLAL…MVAS), 154–174 (LSAH…TALD), 191–211 (GVAW…AWVA), 248–268 (FLLH…LVVL), and 289–309 (TMVV…IAVA). H254 contributes to the heme binding site. Position 310 (H310) interacts with heme. The chain crosses the membrane as a helical span at residues 311-331 (QLTGALLVISTAWAAHAIGTA).

It belongs to the COX15/CtaA family. Type 2 subfamily. In terms of assembly, interacts with CtaB. The cofactor is heme b.

Its subcellular location is the cell membrane. It catalyses the reaction Fe(II)-heme o + 2 A + H2O = Fe(II)-heme a + 2 AH2. It participates in porphyrin-containing compound metabolism; heme A biosynthesis; heme A from heme O: step 1/1. Catalyzes the conversion of heme O to heme A by two successive hydroxylations of the methyl group at C8. The first hydroxylation forms heme I, the second hydroxylation results in an unstable dihydroxymethyl group, which spontaneously dehydrates, resulting in the formyl group of heme A. The sequence is that of Heme A synthase from Erythrobacter litoralis (strain HTCC2594).